A 488-amino-acid polypeptide reads, in one-letter code: Germacrene A hydroxylase (488 aa).

Over 1–6 (MEVSLT) the chain is Cytoplasmic. The chain crosses the membrane as a helical; Signal-anchor for type II membrane protein span at residues 7 to 23 (TSIALATIVFFLYKLLT). The Lumenal portion of the chain corresponds to 24-488 (RPTSSKNRLP…KTELMLVPSF (465 aa)). N-linked (GlcNAc...) asparagine glycans are attached at residues asparagine 169, asparagine 260, asparagine 379, and asparagine 412. Cysteine 432 lines the heme pocket.

Belongs to the cytochrome P450 family. Heme is required as a cofactor. In terms of tissue distribution, expressed in leaf primordia.

The protein resides in the endoplasmic reticulum membrane. The enzyme catalyses (+)-(R)-germacrene A + 3 reduced [NADPH--hemoprotein reductase] + 3 O2 = germacra-1(10),4,11(13)-trien-12-oate + 3 oxidized [NADPH--hemoprotein reductase] + 4 H2O + 4 H(+). Its pathway is secondary metabolite biosynthesis; terpenoid biosynthesis. Its function is as follows. Involved in the biosynthesis of germacrene-derived sesquiterpene lactones. Catalyzes three consecutive oxidations of germacrene A to produce germacrene A acid. Could also catalyze the three-step oxidation of non-natural substrate amorphadiene to artemisinic acid. This chain is Germacrene A hydroxylase, found in Helianthus annuus (Common sunflower).